The chain runs to 166 residues: HTH-type transcriptional regulator PetP (166 aa).

One can recognise an HTH marR-type domain in the interval 17–152 (DEQLRKGIEA…FRQVLEAMMD (136 aa)). The H-T-H motif DNA-binding region spans 66–89 (VTTLISVLGVTKQSLNRVLRTLID).

In terms of biological role, necessary for photosynthetic and respiratory growth. This Rhodobacter capsulatus (strain ATCC BAA-309 / NBRC 16581 / SB1003) protein is HTH-type transcriptional regulator PetP (petP).